The sequence spans 236 residues: MNTTPDTPTPRALRELTPLEARILGVLVEKQHTVPDTYPLSLNALTAGCNQKTARAPVMNVSEDEVTTALDELKRLSLVMEGSSSRVPRFEHNMNRVLGIPSQAIALLTILLLRGPQTAAELRLNSARLHGFADISSVEAFLDELAARAQPLVVRLPRAPGARENRWMHLMCGDVNMADFASADAGGGADSVPPSEFEALKAEQKRLADEVARLNALVQRMASELGIDVDAPGDAS.

This sequence belongs to the UPF0502 family.

The chain is UPF0502 protein Bcen2424_5610 from Burkholderia cenocepacia (strain HI2424).